Reading from the N-terminus, the 494-residue chain is Alpha-amylase A (494 aa).

The signal sequence occupies residues 1-18 (MFLAKSLVCLALLAVANA). A Pyrrolidone carboxylic acid modification is found at Gln-19. Cysteines 46 and 102 form a disulfide. Asn-116, Arg-165, and Asp-174 together coordinate Ca(2+). A disulfide bridge connects residues Cys-153 and Cys-167. Chloride is bound at residue Arg-202. The active-site Nucleophile is Asp-204. Position 208 (His-208) interacts with Ca(2+). The active-site Proton donor is the Glu-241. Chloride-binding residues include Asn-304 and Arg-343. Disulfide bonds link Cys-376–Cys-382 and Cys-448–Cys-460.

Belongs to the glycosyl hydrolase 13 family. Monomer. Ca(2+) is required as a cofactor. The cofactor is chloride.

The catalysed reaction is Endohydrolysis of (1-&gt;4)-alpha-D-glucosidic linkages in polysaccharides containing three or more (1-&gt;4)-alpha-linked D-glucose units.. This Drosophila mauritiana (Fruit fly) protein is Alpha-amylase A (Amy-d).